The sequence spans 488 residues: Histamine H1 receptor (488 aa).

The Extracellular segment spans residues 1–29 (MSLPNTSSASEDKMCEGNRTAMASPQLLP). N-linked (GlcNAc...) asparagine glycosylation is found at Asn-5 and Asn-18. The chain crosses the membrane as a helical span at residues 30–50 (LVVVLSSISLVTVGLNLLVLY). Residues 51-64 (AVRSERKLHTVGNL) are Cytoplasmic-facing. The chain crosses the membrane as a helical span at residues 65-89 (YIVSLSVADLIVGAVVMPMNILYLI). Residues 90-97 (MTKWSLGR) are Extracellular-facing. Residues 98–123 (PLCLFWLSMDYVASTASIFSVFILCI) traverse the membrane as a helical segment. A disulfide bridge connects residues Cys-100 and Cys-180. Positions 107 and 112 each coordinate histamine. Residues 107–112 (DYVAST) are important for agonist binding. At 124–144 (DRYRSVQQPLRYLRYRTKTRA) the chain is on the cytoplasmic side. A phosphothreonine mark is found at Thr-140 and Thr-142. The helical transmembrane segment at 145–164 (SATILGAWFLSFLWVIPILG) threads the bilayer. Residues 165–188 (WHHFTPLAPELREDKCETDFYNVT) lie on the Extracellular side of the membrane. The chain crosses the membrane as a helical span at residues 189 to 211 (WFKIMTAIINFYLPTLLMLWFYV). Asn-198 serves as a coordination point for histamine. Residues 212-417 (KIYKAVRRHC…LNRERKAAKQ (206 aa)) lie on the Cytoplasmic side of the membrane. Position 230 is a phosphoserine (Ser-230). Residues 245–337 (KEGAKKPGKE…SQPKMDEQSL (93 aa)) are disordered. Positions 322–337 (ANDQTLSQPKMDEQSL) are enriched in polar residues. Residues Ser-344, Ser-347, Ser-381, Ser-383, Ser-397, and Ser-399 each carry the phosphoserine modification. A helical membrane pass occupies residues 418–441 (LGCIMAAFILCWIPYFIFFMVIAF). The interval 425–429 (FILCW) is important for agonist binding. Tyr-432 serves as a coordination point for histamine. Residues Cys-442 and Cys-445 are joined by a disulfide bond. Residues 442–447 (CNSCCS) lie on the Extracellular side of the membrane. The chain crosses the membrane as a helical span at residues 448–470 (EPVHMFTIWLGYINSTLNPLIYP). Residues 471 to 488 (LCNENFKKTFKKILHIRS) are Cytoplasmic-facing.

Belongs to the G-protein coupled receptor 1 family. Phosphorylation at sites in the second and third cytoplasmic loops independently contribute to agonist-induced receptor down-regulation.

Its subcellular location is the cell membrane. Its function is as follows. G-protein-coupled receptor for histamine, a biogenic amine that functions as an immune modulator and a neurotransmitter. Through the H1 receptor, histamine mediates the contraction of smooth muscles and increases capillary permeability due to contraction of terminal venules. Also mediates neurotransmission in the central nervous system and thereby regulates circadian rhythms, emotional and locomotor activities as well as cognitive functions. In Mus musculus (Mouse), this protein is Histamine H1 receptor.